Consider the following 432-residue polypeptide: MSELKDCPLQFHDFKSVDHMKVCPRYTAVLARSEDDGIGIEELDTLQLELETLLSSASRRLRVLEAETQILTDWQDKKGDRRILKLARDHELGAPPKHGKPKKQKLEGKTGHGPGPGPGRPKSKNVQPKIQEYEFTDDPIDVPRIPKNDAPNRFWASVEPYCADITSEEVRTLEELLKPPEDEAEHYKIPPLGKHYSQRWAQEDLLEEQKDGARAAAVADKKKGLIGPLTELDTKDVDALLKKSEAQHEQPEDGCPFGALTQRLLQALVEENIISPMEDSPIPDMSGKESGADGASTSPRNQNKPFSVPHTKSLESRIKEELIAQGLLESEDRPAEDSEDEVLAELRKRQAELKALSAHNRTKKHDLLRLAKEEVSRQELRQRVRMADNEVMDAFRKIMAARQKKRTPTKKEKDQAWKTLKERESILKLLDG.

Lys21 is covalently cross-linked (Glycyl lysine isopeptide (Lys-Gly) (interchain with G-Cter in SUMO2)). Residues 40–69 are a coiled coil; that stretch reads IEELDTLQLELETLLSSASRRLRVLEAETQ. Residues 87 to 127 are disordered; that stretch reads ARDHELGAPPKHGKPKKQKLEGKTGHGPGPGPGRPKSKNVQ. Lys129 is covalently cross-linked (Glycyl lysine isopeptide (Lys-Gly) (interchain with G-Cter in SUMO2)). A disordered region spans residues 272–319; the sequence is NIISPMEDSPIPDMSGKESGADGASTSPRNQNKPFSVPHTKSLESRIK. Ser280 and Ser298 each carry phosphoserine. Residues 295–305 show a composition bias toward polar residues; it reads ASTSPRNQNKP. The stretch at 367–407 forms a coiled coil; sequence LLRLAKEEVSRQELRQRVRMADNEVMDAFRKIMAARQKKRT. Lys418 carries the post-translational modification N6-acetyllysine.

This sequence belongs to the NGG1 family. The PCAF complex is composed of a number of TBP-associated factors (TAFS), such as TAF5, TAF5L, TAF6, TAF6L, TAF9, TAF10 and TAF12, PCAF, and also PCAF-associated factors (PAFs), such as TADA2L/ADA2, TADA3L/ADA3 and SPT3. Interacts directly with TADA2L and PCAF and also with the high-risk HPV oncoprotein E6. Component of the STAGA transcription coactivator-HAT complex, at least composed of SUPT3H, GCN5L2, TAF5L, TAF6L, SUPT7L, TADA3L, TAD1L, TAF10, TAF12, TRRAP and TAF9. Component of the TFTC-HAT complex. Component of the ADA2A-containing complex (ATAC), composed of KAT14, KAT2A, TADA2L, TADA3L, ZZ3, MBIP, WDR5, YEATS2, CCDC101 and DR1.

It is found in the nucleus. In terms of biological role, functions as a component of the PCAF complex. The PCAF complex is capable of efficiently acetylating histones in a nucleosomal context. The PCAF complex could be considered as the human version of the yeast SAGA complex. Also known as a coactivator for p53/TP53-dependent transcriptional activation. Component of the ATAC complex, a complex with histone acetyltransferase activity on histones H3 and H4. The protein is Transcriptional adapter 3 (Tada3) of Rattus norvegicus (Rat).